A 581-amino-acid polypeptide reads, in one-letter code: DNA primase (581 aa).

The CHC2-type zinc finger occupies 40 to 64; sequence CPFHNEKTPSFTVNGEKQFYHCFGC. Residues 259–341 enclose the Toprim domain; that stretch reads NRLLVVEGYM…GRQLRFMFLP (83 aa). Residues Glu265, Asp309, and Asp311 each contribute to the Mg(2+) site.

Belongs to the DnaG primase family. Monomer. Interacts with DnaB. The cofactor is Zn(2+). It depends on Mg(2+) as a cofactor.

The enzyme catalyses ssDNA + n NTP = ssDNA/pppN(pN)n-1 hybrid + (n-1) diphosphate.. RNA polymerase that catalyzes the synthesis of short RNA molecules used as primers for DNA polymerase during DNA replication. This chain is DNA primase, found in Escherichia coli O6:H1 (strain CFT073 / ATCC 700928 / UPEC).